The chain runs to 375 residues: MSAVLDLTCELIARPSVTPDDAGCQALLAARLKQAGFQCDHLRLGDVDNLWATHGLGAPVLVLLGHTDVVPTGPRESWTSDPFTPHIRDGVLYGRGAADMKGSVAAFVVAAEQFVADHPDHPGTLAVLLTSDEEGDAIDGVRHVARLFAARGQRIDWCITGEPSSTATLGDLLRVGRRGSLSAKLRVQGVQGHVAYPEKARNPIHQAAPALAELCARRWDDGYESFPPTSLQISNIHAGTGANNVIPGELDVDFNIRYNPHWDAPKLEAEITALLERHGLQYTLKWHRSGEPFYTPEGTLRAIARAVLAEHIGRAPEESTGGGTSDARFIAPLGAQCIEVGPVNASIHQVDENVRVDDLEALPGLYQRLVERLLV.

His-66 is a Zn(2+) binding site. Asp-68 is a catalytic residue. Residue Asp-99 participates in Zn(2+) binding. Catalysis depends on Glu-133, which acts as the Proton acceptor. The Zn(2+) site is built by Glu-134, Glu-162, and His-348.

It belongs to the peptidase M20A family. DapE subfamily. As to quaternary structure, homodimer. Zn(2+) serves as cofactor. Requires Co(2+) as cofactor.

It carries out the reaction N-succinyl-(2S,6S)-2,6-diaminopimelate + H2O = (2S,6S)-2,6-diaminopimelate + succinate. It functions in the pathway amino-acid biosynthesis; L-lysine biosynthesis via DAP pathway; LL-2,6-diaminopimelate from (S)-tetrahydrodipicolinate (succinylase route): step 3/3. Catalyzes the hydrolysis of N-succinyl-L,L-diaminopimelic acid (SDAP), forming succinate and LL-2,6-diaminopimelate (DAP), an intermediate involved in the bacterial biosynthesis of lysine and meso-diaminopimelic acid, an essential component of bacterial cell walls. The polypeptide is Succinyl-diaminopimelate desuccinylase (Stenotrophomonas maltophilia (strain K279a)).